The sequence spans 301 residues: Nucleotide-binding protein ELI_02120 (301 aa).

12 to 19 (GMSGAGKS) contacts ATP. A GTP-binding site is contributed by 62–65 (DSRT).

It belongs to the RapZ-like family.

In terms of biological role, displays ATPase and GTPase activities. This chain is Nucleotide-binding protein ELI_02120, found in Erythrobacter litoralis (strain HTCC2594).